Here is a 123-residue protein sequence, read N- to C-terminus: UPF0102 protein CLK_1817 (123 aa).

It belongs to the UPF0102 family.

The chain is UPF0102 protein CLK_1817 from Clostridium botulinum (strain Loch Maree / Type A3).